Consider the following 939-residue polypeptide: MNEDQFPKAYDPKSSETGVYSFWERSGIFVANASSEKPAYSIVMPPPNVTGILHMGHALVNTLQDTLIRYKRMQGFEVCWVPGTDHAGIATQTVVERHLKASLGKQRTDFSREEFLKHVWDWKEKSQNVILSQLRQLGCSCDWSRQRFTMDPGANRAVKKAFKILFDKGVIYRGYYLVNWDPILQTALADDEVEYEERDGWLYYIRYQVVNSEEFITVATTRPETLLGDTAIAVSPEDLRYSHLIGAKVVVPFVNREIPIIGDFSVDASFGTGAVKITPAHDKDDYKTGMNHQLPMINILTPTGEINENGGIFTGLSREVARENIITSLEALGLFVKKEAYSSRVGVSYRSGAIIEPYLSKQWFVSVDSFRDSLRGFVNSEEIRIFPPEFVRNYLTWVNNLKDWCISRQLWWGHRIPVWHNKHDENVICFDGEGGPEEVMRDPESWYQDPDVLDTWFSSGLWPLTCFGWPDENSLDLKKFYPTAVLVTGHDILFFWVTRMVLMCSAMVDTEPFSDVFLHGLIFGKSYREYDEKGEWFYVSGERKRDYDKGKALPKNVVAKWEKLSKSKGNVIDPIEMIEAYGADAVRLTLCSCANRGEQIDLDYHLFEEYKNFINKLWNGARFIFGHISELTSRDLEEGVNQDLLGLEDFYILDRFNELLDLIDGHYNCYSFDKIASLAYDFFKNDLCSTYLEIIKPTLFGKQDSDQQRATKRKLLATLLINILGVLHPIVPYITETLFQKLKATLGTVENGKGDSVTGHAVSMLRSEACMVAEYPKPIHVAFPQGLRESFGIAERLVYTIRNIRGEMQLDPREPLQAFVISSEKKELVDVCIPIMCALGGVKTVEQLAEAPKDSIFSLGVVEGIQVGVILPPEHLAKERVRLEKEKTRLEKSIDSVSKLLASEDFRTRANPSLVQAKKDSLRNSQRELQSILDKLASL.

A 'HIGH' region motif is present at residues 47-57; sequence PNVTGILHMGH. The 'KMSKS' region signature appears at 563-567; that stretch reads KLSKS. Residue lysine 566 participates in ATP binding. Residues 874–939 are a coiled coil; that stretch reads EHLAKERVRL…QSILDKLASL (66 aa).

Belongs to the class-I aminoacyl-tRNA synthetase family. ValS type 1 subfamily. Monomer.

Its subcellular location is the cytoplasm. It carries out the reaction tRNA(Val) + L-valine + ATP = L-valyl-tRNA(Val) + AMP + diphosphate. Catalyzes the attachment of valine to tRNA(Val). As ValRS can inadvertently accommodate and process structurally similar amino acids such as threonine, to avoid such errors, it has a 'posttransfer' editing activity that hydrolyzes mischarged Thr-tRNA(Val) in a tRNA-dependent manner. The protein is Valine--tRNA ligase of Chlamydia trachomatis serovar A (strain ATCC VR-571B / DSM 19440 / HAR-13).